The primary structure comprises 64 residues: Large ribosomal subunit protein bL35 (64 aa).

Over residues 1–15 (MPKSKTHSGTAKRFK) the composition is skewed to basic residues. Positions 1 to 23 (MPKSKTHSGTAKRFKVSGSGKIL) are disordered.

Belongs to the bacterial ribosomal protein bL35 family.

In Rhodococcus jostii (strain RHA1), this protein is Large ribosomal subunit protein bL35.